A 264-amino-acid chain; its full sequence is MAATGEALTPQGYIQHHLTNLSVGEGFWTWHIDSLFFSVGLGVLFLWLFRSVGKKATTGVPGKLQCFVEMIVEFVDSSVKETFHGRNPVIAPLALTIFVWVFMMNFMDMVPVDWIPELAMAAGIPYMKVVPTTDLNITFSMAIGVFLLIIYYSIKVKGISGFVKELTLQPFNHKAMIPVNLLLETVTLIAKPISLALRLFGNLYAGELIFILIALMYGANWALSTLGVTLQLGWLIFHILVITLQAFIFMMLTIVYLSMAHEDH.

6 helical membrane passes run 29–49 (TWHI…LWLF), 89–109 (VIAP…FMDM), 134–154 (DLNI…YYSI), 177–197 (IPVN…SLAL), 208–228 (LIFI…TLGV), and 235–255 (LIFH…LTIV).

Belongs to the ATPase A chain family. F-type ATPases have 2 components, CF(1) - the catalytic core - and CF(0) - the membrane proton channel. CF(1) has five subunits: alpha(3), beta(3), gamma(1), delta(1), epsilon(1). CF(0) has three main subunits: a(1), b(2) and c(9-12). The alpha and beta chains form an alternating ring which encloses part of the gamma chain. CF(1) is attached to CF(0) by a central stalk formed by the gamma and epsilon chains, while a peripheral stalk is formed by the delta and b chains.

Its subcellular location is the cell inner membrane. Functionally, key component of the proton channel; it plays a direct role in the translocation of protons across the membrane. The polypeptide is ATP synthase subunit a (Shewanella woodyi (strain ATCC 51908 / MS32)).